Here is a 206-residue protein sequence, read N- to C-terminus: Small ribosomal subunit protein uS4 (206 aa).

In terms of domain architecture, S4 RNA-binding spans 98-163; sequence MRLDNIVYRL…SEKFKTFVEN (66 aa).

Belongs to the universal ribosomal protein uS4 family. As to quaternary structure, part of the 30S ribosomal subunit. Contacts protein S5. The interaction surface between S4 and S5 is involved in control of translational fidelity.

Functionally, one of the primary rRNA binding proteins, it binds directly to 16S rRNA where it nucleates assembly of the body of the 30S subunit. In terms of biological role, with S5 and S12 plays an important role in translational accuracy. The sequence is that of Small ribosomal subunit protein uS4 from Clostridium beijerinckii (strain ATCC 51743 / NCIMB 8052) (Clostridium acetobutylicum).